The chain runs to 337 residues: Succinylglutamate desuccinylase (337 aa).

Zn(2+)-binding residues include His-59, Glu-62, and His-152. Glu-216 is a catalytic residue.

This sequence belongs to the AspA/AstE family. Succinylglutamate desuccinylase subfamily. The cofactor is Zn(2+).

The catalysed reaction is N-succinyl-L-glutamate + H2O = L-glutamate + succinate. The protein operates within amino-acid degradation; L-arginine degradation via AST pathway; L-glutamate and succinate from L-arginine: step 5/5. Functionally, transforms N(2)-succinylglutamate into succinate and glutamate. The protein is Succinylglutamate desuccinylase of Ectopseudomonas mendocina (strain ymp) (Pseudomonas mendocina).